The primary structure comprises 601 residues: Elongation factor 4 (601 aa).

A tr-type G domain is found at 6–188; it reads NYIRNFSIVA…AIVTQLPSPR (183 aa). GTP is bound by residues 18–23 and 135–138; these read DHGKST and NKVD.

Belongs to the TRAFAC class translation factor GTPase superfamily. Classic translation factor GTPase family. LepA subfamily.

The protein resides in the cell inner membrane. It carries out the reaction GTP + H2O = GDP + phosphate + H(+). Its function is as follows. Required for accurate and efficient protein synthesis under certain stress conditions. May act as a fidelity factor of the translation reaction, by catalyzing a one-codon backward translocation of tRNAs on improperly translocated ribosomes. Back-translocation proceeds from a post-translocation (POST) complex to a pre-translocation (PRE) complex, thus giving elongation factor G a second chance to translocate the tRNAs correctly. Binds to ribosomes in a GTP-dependent manner. This is Elongation factor 4 from Bartonella henselae (strain ATCC 49882 / DSM 28221 / CCUG 30454 / Houston 1) (Rochalimaea henselae).